The chain runs to 100 residues: Small ribosomal subunit protein uS14c (100 aa).

The protein belongs to the universal ribosomal protein uS14 family. Part of the 30S ribosomal subunit.

Its subcellular location is the plastid. It localises to the chloroplast. In terms of biological role, binds 16S rRNA, required for the assembly of 30S particles. This is Small ribosomal subunit protein uS14c from Tupiella akineta (Green alga).